Reading from the N-terminus, the 145-residue chain is Phospholipase A2 (145 aa).

The signal sequence occupies residues 1–15; it reads MRLLVLAALLTVGAG. Glutamine 16 carries the pyrrolidone carboxylic acid modification. Residues 16-22 constitute a propeptide, removed by trypsin; the sequence is QAGLNSR. Disulfide bonds link cysteine 33–cysteine 99, cysteine 49–cysteine 145, cysteine 51–cysteine 67, cysteine 66–cysteine 127, cysteine 73–cysteine 120, cysteine 83–cysteine 113, and cysteine 106–cysteine 118. Ca(2+) is bound by residues tyrosine 50, glycine 52, and glycine 54. Residue histidine 70 is part of the active site. A Ca(2+)-binding site is contributed by aspartate 71. Aspartate 121 is a catalytic residue.

It belongs to the phospholipase A2 family. In terms of assembly, monomer or homodimer. Ca(2+) is required as a cofactor. Post-translationally, activated by trypsin cleavage in the duodenum. Can also be activated by thrombin or autocatalytically.

The protein localises to the secreted. It catalyses the reaction a 1,2-diacyl-sn-glycero-3-phosphocholine + H2O = a 1-acyl-sn-glycero-3-phosphocholine + a fatty acid + H(+). It carries out the reaction 1,2-ditetradecanoyl-sn-glycero-3-phosphocholine + H2O = 1-tetradecanoyl-sn-glycero-3-phosphocholine + tetradecanoate + H(+). The catalysed reaction is 1,2-dihexadecanoyl-sn-glycero-3-phosphocholine + H2O = 1-hexadecanoyl-sn-glycero-3-phosphocholine + hexadecanoate + H(+). The enzyme catalyses 1-hexadecanoyl-2-(9Z-octadecenoyl)-sn-glycero-3-phosphocholine + H2O = 1-hexadecanoyl-sn-glycero-3-phosphocholine + (9Z)-octadecenoate + H(+). It catalyses the reaction 1-hexadecanoyl-2-(5Z,8Z,11Z,14Z-eicosatetraenoyl)-sn-glycero-3-phosphocholine + H2O = 1-hexadecanoyl-sn-glycero-3-phosphocholine + (5Z,8Z,11Z,14Z)-eicosatetraenoate + H(+). It carries out the reaction 1-hexadecanoyl-2-(9Z-octadecenoyl)-sn-glycero-3-phospho-(1'-sn-glycerol) + H2O = 1-hexadecanoyl-sn-glycero-3-phospho-(1'-sn-glycerol) + (9Z)-octadecenoate + H(+). The catalysed reaction is N-hexadecanoyl-1,2-di-(9Z-octadecenoyl)-sn-glycero-3-phosphoethanolamine + H2O = N-hexadecanoyl-1-(9Z-octadecenoyl)-sn-glycero-3-phosphoethanolamine + (9Z)-octadecenoate + H(+). The enzyme catalyses 1-hexadecanoyl-2-(9Z,12Z-octadecadienoyl)-sn-glycero-3-phosphoethanolamine + H2O = 1-hexadecanoyl-sn-glycero-3-phosphoethanolamine + (9Z,12Z)-octadecadienoate + H(+). It catalyses the reaction N,1-dihexadecanoyl-2-(9Z,12Z-octadecadienoyl)-sn-glycero-3-phosphoethanolamine + H2O = N,1-dihexadecanoyl-sn-glycero-3-phosphoethanolamine + (9Z,12Z)-octadecadienoate + H(+). Secretory calcium-dependent phospholipase A2 that primarily targets dietary phospholipids in the intestinal tract. Hydrolyzes the ester bond of the fatty acyl group attached at sn-2 position of phospholipids (phospholipase A2 activity) with preference for phosphatidylethanolamines and phosphatidylglycerols over phosphatidylcholines. May play a role in the biosynthesis of N-acyl ethanolamines that regulate energy metabolism and inflammation in the intestinal tract. Hydrolyzes N-acyl phosphatidylethanolamines to N-acyl lysophosphatidylethanolamines, which are further cleaved by a lysophospholipase D to release N-acyl ethanolamines. May act in an autocrine and paracrine manner. Has anti-helminth activity in a process regulated by gut microbiota. Upon helminth infection of intestinal epithelia, directly affects phosphatidylethanolamine contents in the membrane of helminth larvae, likely controlling an array of phospholipid-mediated cellular processes such as membrane fusion and cell division while providing for better immune recognition, ultimately reducing larvae integrity and infectivity. The polypeptide is Phospholipase A2 (PLA2G1B) (Bos taurus (Bovine)).